We begin with the raw amino-acid sequence, 137 residues long: Dormancy-associated protein homolog 3 (137 aa).

Disordered regions lie at residues 1–55 and 69–137; these read MGLL…DSLP and KPPG…TYGM. Polar residues predominate over residues 32-43; it reads FRPSSGNDQSEA. Residues 70-87 show a composition bias toward low complexity; sequence PPGYQGSSAPASPAGSTP. Serine 81 is subject to Phosphoserine. Over residues 88–97 the composition is skewed to pro residues; it reads PLSPFSPPLS. Over residues 104–118 the composition is skewed to basic and acidic residues; it reads EPFRFRRRSTSDAFE. Positions 127–137 are enriched in polar residues; sequence GPRSSPPTYGM.

It belongs to the DRM1/ARP family.

The chain is Dormancy-associated protein homolog 3 from Arabidopsis thaliana (Mouse-ear cress).